Consider the following 660-residue polypeptide: Macrolide export ATP-binding/permease protein MacB (660 aa).

An ABC transporter domain is found at 10–248 (LVLENIVRKF…TDSQALYGKQ (239 aa)). 46–53 (GASGSGKS) provides a ligand contact to ATP. 4 helical membrane-spanning segments follow: residues 285–305 (FLTM…VALG), 532–552 (ILTL…GIGV), 593–613 (VIGG…FLLF), and 625–645 (SIIL…FSPA).

Belongs to the ABC transporter superfamily. Macrolide exporter (TC 3.A.1.122) family. As to quaternary structure, homodimer.

Its subcellular location is the cell inner membrane. Non-canonical ABC transporter that contains transmembrane domains (TMD), which form a pore in the inner membrane, and an ATP-binding domain (NBD), which is responsible for energy generation. Confers resistance against macrolides. The sequence is that of Macrolide export ATP-binding/permease protein MacB from Bartonella henselae (strain ATCC 49882 / DSM 28221 / CCUG 30454 / Houston 1) (Rochalimaea henselae).